The chain runs to 199 residues: Probable GTP-binding protein EngB (199 aa).

An EngB-type G domain is found at 28–199 (DLPEIALAGR…DSWDAILEQV (172 aa)). GTP is bound by residues 36-43 (GRSNVGKS), 63-67 (GKTQL), 81-84 (DVPG), 148-151 (TKAD), and 180-182 (FSS). Mg(2+)-binding residues include serine 43 and threonine 65.

Belongs to the TRAFAC class TrmE-Era-EngA-EngB-Septin-like GTPase superfamily. EngB GTPase family. Mg(2+) is required as a cofactor.

Necessary for normal cell division and for the maintenance of normal septation. This chain is Probable GTP-binding protein EngB, found in Streptococcus pyogenes serotype M18 (strain MGAS8232).